The sequence spans 356 residues: Hyaluronan and proteoglycan link protein 1 (356 aa).

The propeptide occupies 1–9 (MRSLLLLVL). The Ig-like V-type domain maps to 40–154 (PRLLVEAEQA…EGLEDDTAVV (115 aa)). The N-linked (GlcNAc...) asparagine glycan is linked to asparagine 58. 5 disulfide bridges follow: cysteine 63/cysteine 141, cysteine 183/cysteine 254, cysteine 207/cysteine 228, cysteine 281/cysteine 351, and cysteine 306/cysteine 327. Link domains follow at residues 161 to 256 (VVFP…FCFT) and 261 to 353 (GRFY…YCFR).

Belongs to the HAPLN family. In terms of tissue distribution, ubiquitously expressed.

It is found in the secreted. Its subcellular location is the extracellular space. The protein localises to the extracellular matrix. Its function is as follows. Stabilizes the aggregates of proteoglycan monomers with hyaluronic acid in the extracellular cartilage matrix. This chain is Hyaluronan and proteoglycan link protein 1 (Hapln1), found in Mus musculus (Mouse).